The sequence spans 239 residues: Ribonuclease PH (239 aa).

Residues Arg87 and 125–127 (GTR) each bind phosphate.

Belongs to the RNase PH family. In terms of assembly, homohexameric ring arranged as a trimer of dimers.

The enzyme catalyses tRNA(n+1) + phosphate = tRNA(n) + a ribonucleoside 5'-diphosphate. Its function is as follows. Phosphorolytic 3'-5' exoribonuclease that plays an important role in tRNA 3'-end maturation. Removes nucleotide residues following the 3'-CCA terminus of tRNAs; can also add nucleotides to the ends of RNA molecules by using nucleoside diphosphates as substrates, but this may not be physiologically important. Probably plays a role in initiation of 16S rRNA degradation (leading to ribosome degradation) during starvation. This chain is Ribonuclease PH, found in Dehalococcoides mccartyi (strain ATCC BAA-2266 / KCTC 15142 / 195) (Dehalococcoides ethenogenes (strain 195)).